The primary structure comprises 510 residues: MIWHVQNENFILDSTRIFMKAFHLLLFDGSLIFPECILIFGLILLLMIDSTSDQKDIPWLYFISSTSLVMSITALLFRWREEPMISFSGNFQTNNFNEIFQFLILLCSTLCIPLSVEYIECTEMAITEFLLFILTATIGGMFLCGANDLITIFVAPECFSLCSYLLSGYTKKDVRSNEATMKYLLMGGASSSILVHGFSWLYGSSGGEIELQEIVNGLINTQMYNSPGISIALIFITVGIGFKLSPAPSHQWTPDVYEGSPTPVVAFLSVTSKVAASASATRIFDIPFYFSSNEWHLLLEILAILSMILGNLIAITQTSMKRMLAYSSIGQIGYVIIGIIVGDSNDGYASMITYMLFYISMNLGTFACIVLFGLRTGTENIRDYAGLYTKDPFLALSLALCLLSLGGLPPLAGFFGKLYLFWCGWQAGLYLLVLIGLLTSVVSIYYYLKIIKLLMTGRNQEITPHVRNYRRSPLRSNNSIELSMIVCVIASTIPGISMNPIIAIAQDTLF.

13 consecutive transmembrane segments (helical) span residues 24–44 (LLLFDGSLIFPECILIFGLIL), 57–77 (IPWLYFISSTSLVMSITALLF), 99–119 (IFQFLILLCSTLCIPLSVEYI), 124–144 (MAITEFLLFILTATIGGMFLC), 149–169 (LITIFVAPECFSLCSYLLSGY), 183–203 (YLLMGGASSSILVHGFSWLYG), 227–247 (PGISIALIFITVGIGFKLSPA), 295–315 (WHLLLEILAILSMILGNLIAI), 323–343 (MLAYSSIGQIGYVIIGIIVGD), 354–374 (YMLFYISMNLGTFACIVLFGL), 395–415 (ALSLALCLLSLGGLPPLAGFF), 418–438 (LYLFWCGWQAGLYLLVLIGLL), and 484–504 (MIVCVIASTIPGISMNPIIAI).

This sequence belongs to the complex I subunit 2 family. As to quaternary structure, NDH is composed of at least 16 different subunits, 5 of which are encoded in the nucleus.

It localises to the plastid. The protein localises to the chloroplast thylakoid membrane. The enzyme catalyses a plastoquinone + NADH + (n+1) H(+)(in) = a plastoquinol + NAD(+) + n H(+)(out). The catalysed reaction is a plastoquinone + NADPH + (n+1) H(+)(in) = a plastoquinol + NADP(+) + n H(+)(out). Its function is as follows. NDH shuttles electrons from NAD(P)H:plastoquinone, via FMN and iron-sulfur (Fe-S) centers, to quinones in the photosynthetic chain and possibly in a chloroplast respiratory chain. The immediate electron acceptor for the enzyme in this species is believed to be plastoquinone. Couples the redox reaction to proton translocation, and thus conserves the redox energy in a proton gradient. The chain is NAD(P)H-quinone oxidoreductase subunit 2 B, chloroplastic from Helianthus annuus (Common sunflower).